Consider the following 162-residue polypeptide: Corticoliberin-2 (162 aa).

The first 24 residues, 1–24 (MRLNFLVTTMALLVAFPPPYECRA), serve as a signal peptide directing secretion. Residues 25–119 (IDSSSNQPVT…ALDSEERERR (95 aa)) constitute a propeptide that is removed on maturation. Residues 57–79 (LGNRNKNSPRSPPDTYPEASQYS) form a disordered region. The residue at position 160 (Phe160) is a Phenylalanine amide.

Belongs to the sauvagine/corticotropin-releasing factor/urotensin I family.

The protein resides in the secreted. Functionally, this hormone from hypothalamus regulates the release of corticotropin from pituitary gland. The sequence is that of Corticoliberin-2 (crf2) from Catostomus commersonii (White sucker).